Consider the following 576-residue polypeptide: Proline--tRNA ligase (576 aa).

It belongs to the class-II aminoacyl-tRNA synthetase family. ProS type 1 subfamily. In terms of assembly, homodimer.

The protein resides in the cytoplasm. It carries out the reaction tRNA(Pro) + L-proline + ATP = L-prolyl-tRNA(Pro) + AMP + diphosphate. Catalyzes the attachment of proline to tRNA(Pro) in a two-step reaction: proline is first activated by ATP to form Pro-AMP and then transferred to the acceptor end of tRNA(Pro). As ProRS can inadvertently accommodate and process non-cognate amino acids such as alanine and cysteine, to avoid such errors it has two additional distinct editing activities against alanine. One activity is designated as 'pretransfer' editing and involves the tRNA(Pro)-independent hydrolysis of activated Ala-AMP. The other activity is designated 'posttransfer' editing and involves deacylation of mischarged Ala-tRNA(Pro). The misacylated Cys-tRNA(Pro) is not edited by ProRS. This is Proline--tRNA ligase from Pelobacter propionicus (strain DSM 2379 / NBRC 103807 / OttBd1).